The sequence spans 62 residues: uncharacterized protein (62 aa).

The disordered stretch occupies residues M1–K62. Residues T28 to H37 show a composition bias toward basic and acidic residues.

This is an uncharacterized protein from Caenorhabditis elegans.